Reading from the N-terminus, the 267-residue chain is Ribosomal RNA small subunit methyltransferase A (267 aa).

Positions 16, 18, 43, 64, 89, and 110 each coordinate S-adenosyl-L-methionine.

It belongs to the class I-like SAM-binding methyltransferase superfamily. rRNA adenine N(6)-methyltransferase family. RsmA subfamily.

It localises to the cytoplasm. It carries out the reaction adenosine(1518)/adenosine(1519) in 16S rRNA + 4 S-adenosyl-L-methionine = N(6)-dimethyladenosine(1518)/N(6)-dimethyladenosine(1519) in 16S rRNA + 4 S-adenosyl-L-homocysteine + 4 H(+). Specifically dimethylates two adjacent adenosines (A1518 and A1519) in the loop of a conserved hairpin near the 3'-end of 16S rRNA in the 30S particle. May play a critical role in biogenesis of 30S subunits. The sequence is that of Ribosomal RNA small subunit methyltransferase A from Pseudomonas putida (strain ATCC 47054 / DSM 6125 / CFBP 8728 / NCIMB 11950 / KT2440).